A 142-amino-acid chain; its full sequence is Tol-Pal system protein TolR (142 aa).

Residues 1–17 (MARARGRGRRDLKSEIN) are Cytoplasmic-facing. Residues 18–38 (IVPLLDVLLVLLLIFMATAPI) form a helical membrane-spanning segment. The Periplasmic portion of the chain corresponds to 39 to 142 (ITQSVEVDLP…KSVGLMTQPI (104 aa)).

It belongs to the ExbD/TolR family. The Tol-Pal system is composed of five core proteins: the inner membrane proteins TolA, TolQ and TolR, the periplasmic protein TolB and the outer membrane protein Pal. They form a network linking the inner and outer membranes and the peptidoglycan layer.

The protein resides in the cell inner membrane. Its function is as follows. Part of the Tol-Pal system, which plays a role in outer membrane invagination during cell division and is important for maintaining outer membrane integrity. Required, with TolQ, for the proton motive force-dependent activation of TolA and for TolA-Pal interaction. This is Tol-Pal system protein TolR from Escherichia coli O157:H7.